Reading from the N-terminus, the 630-residue chain is tRNA uridine 5-carboxymethylaminomethyl modification enzyme MnmG (630 aa).

13 to 18 is a binding site for FAD; sequence GGGHAG. NAD(+) is bound at residue 273 to 287; sequence GPRYCPSIEDKVMRF.

It belongs to the MnmG family. Homodimer. Heterotetramer of two MnmE and two MnmG subunits. FAD is required as a cofactor.

It is found in the cytoplasm. In terms of biological role, NAD-binding protein involved in the addition of a carboxymethylaminomethyl (cmnm) group at the wobble position (U34) of certain tRNAs, forming tRNA-cmnm(5)s(2)U34. In Actinobacillus pleuropneumoniae serotype 5b (strain L20), this protein is tRNA uridine 5-carboxymethylaminomethyl modification enzyme MnmG.